The primary structure comprises 60 residues: Mastoparan-VB1 (60 aa).

Positions 1-23 (MKNTILLLFTAFIFLSGFFGMSA) are cleaved as a signal peptide. Positions 24-45 (EALADPKADPLAGPFPDADPDP) are excised as a propeptide. AXPX repeat units follow at residues 27 to 30 (ADPK), 31 to 34 (ADPL), 35 to 38 (AGPF), and 40 to 43 (DADP). Leu59 carries the post-translational modification Leucine amide.

As to expression, expressed by the venom gland.

It is found in the secreted. The protein resides in the target cell membrane. Its function is as follows. Antimicrobial peptide. Shows activity against both Gram-positive (S.aureus MIC=1.9-3.75 ug/ml) and -negative (E.coli MIC=15-60 ug/ml) bacteria, as well against fungi (C.albicans MIC=15 ug/ml). Also promotes moderate mast cell degranulation. Does not show hemolytic activity on rabbit and human erythrocytes. Its mast cell degranulation activity may be related to the activation of G-protein coupled receptors in mast cells as well as interaction with other proteins located in cell endosomal membranes in the mast cells. This chain is Mastoparan-VB1, found in Vespa bicolor (Black shield wasp).